Here is a 249-residue protein sequence, read N- to C-terminus: Small ribosomal subunit protein uS2 (249 aa).

It belongs to the universal ribosomal protein uS2 family.

This Bordetella avium (strain 197N) protein is Small ribosomal subunit protein uS2.